We begin with the raw amino-acid sequence, 526 residues long: Tyrosine 2,3-aminomutase (526 aa).

The active-site Proton donor/acceptor is the Tyr-41. His-71 lines the substrate pocket. The 5-imidazolinone (Ala-Gly) cross-link spans 130 to 132; that stretch reads ASG. Residue Ser-131 is modified to 2,3-didehydroalanine (Ser). The substrate site is built by Asn-183 and Arg-288.

The protein belongs to the TAL/TAM family. As to quaternary structure, homotetramer; dimer of dimers. Contains an active site 4-methylidene-imidazol-5-one (MIO), which is formed autocatalytically by cyclization and dehydration of residues Ala-Ser-Gly.

The catalysed reaction is L-tyrosine = 3-amino-3-(4-hydroxyphenyl)propanoate. It carries out the reaction L-tyrosine = (E)-4-coumarate + NH4(+). Has aminomutase and, to a much lesser extent, ammonia-lyase activity. Primarily, catalyzes the rearrangement of L-tyrosine to S-beta-tyrosine, which is probably incorporated into secondary metabolite myxovalargin. The aminomutase activity exclusively produces S-beta-tyrosine. The sequence is that of Tyrosine 2,3-aminomutase from Myxococcus sp. (strain Mx-B0).